The primary structure comprises 290 residues: MDIEAYFERIGYNNPVYTLDLATLTEVLQHQMRTIPFENLNMHCGEAMDLGLEATFDQIVRKKRGGWCLQVNHLLYWALTQMGFETTMLGGYVYIVPVSKYSSEMIHLLVQVTISDRNYIVDAAYGGSYQMWEPVELASGKDQPQVPAIFRLTEENETWYLDQIRREQHVPNQEFVNSDLLEKNTYRKIYSFTLQPRTIEDFEYANTYLQISPVSVFVNTSFCSLQTSEGVCCLIGSTIARRKFSYKENVDLVEFKNVSEEEIEDVLKTAFGVSLERKFVPKNGNLSFSI.

At Met1 the chain carries N-acetylmethionine. The active-site Acyl-thioester intermediate is Cys68. Position 103 (Ser103) interacts with CoA. 106–107 is a substrate binding site; the sequence is IH. Active-site residues include His107 and Asp122. 2 residues coordinate CoA: Tyr208 and Ser287.

Belongs to the arylamine N-acetyltransferase family.

Its subcellular location is the cytoplasm. The enzyme catalyses an arylamine + acetyl-CoA = an N-acetylarylamine + CoA. In terms of biological role, participates in the detoxification of a plethora of hydrazine and arylamine drugs. This chain is Arylamine N-acetyltransferase 1 (NAT1), found in Mesocricetus auratus (Golden hamster).